The chain runs to 146 residues: Sperm surface protein Sp17 (146 aa).

The span at 76-88 (EHESEKCEAEEKS) shows a compositional bias: basic and acidic residues. Positions 76–109 (EHESEKCEAEEKSQSVTEEETPVLTIDSEDDKDK) are disordered. Over residues 92 to 108 (TEEETPVLTIDSEDDKD) the composition is skewed to acidic residues. The IQ domain maps to 110-139 (EEMAALKIQAAFRGHLAREDVKKIRTNKAE).

In terms of assembly, homodimer. May interact with ROPN1. In terms of processing, the N-terminus is blocked. Testis- and sperm-specific.

The protein localises to the membrane. Its function is as follows. Sperm surface zona pellucida binding protein. Helps to bind spermatozoa to the zona pellucida with high affinity. Might function in binding zona pellucida and carbohydrates. The polypeptide is Sperm surface protein Sp17 (SPA17) (Oryctolagus cuniculus (Rabbit)).